The sequence spans 1170 residues: Protein SCAR4 (1170 aa).

Disordered stretches follow at residues lysine 180–arginine 207, asparagine 356–lysine 376, alanine 631–leucine 674, serine 701–glycine 742, asparagine 783–leucine 819, glutamate 960–tyrosine 980, and histidine 1026–glutamate 1046. Positions lysine 183–serine 195 are enriched in basic residues. The segment covering threonine 198–arginine 207 has biased composition (basic and acidic residues). Over residues asparagine 356–glutamate 365 the composition is skewed to polar residues. A compositionally biased stretch (basic and acidic residues) spans serine 366 to lysine 376. Composition is skewed to polar residues over residues serine 640–serine 668, serine 701–aspartate 716, asparagine 783–proline 818, and glutamate 967–tyrosine 980. Residues glutamate 1105–alanine 1123 enclose the WH2 domain.

It belongs to the SCAR/WAVE family. As to quaternary structure, interacts with SPK1. In terms of tissue distribution, expressed in expanding cotyledons, expanding leaves and expanding siliques containing developing embryos. Detected in unopened flower buds and in the expanding tip region of roots. Reduced expression in mature leaves.

It is found in the cytoplasm. Its subcellular location is the cytoskeleton. Functionally, involved in regulation of actin and microtubule organization. Part of a WAVE complex that activates the Arp2/3 complex. Regulates trichome branch positioning and expansion. This chain is Protein SCAR4 (SCAR4), found in Arabidopsis thaliana (Mouse-ear cress).